A 284-amino-acid chain; its full sequence is Bifunctional protein FolD 1 (284 aa).

NADP(+) contacts are provided by residues 166–168 (GAS) and I232.

This sequence belongs to the tetrahydrofolate dehydrogenase/cyclohydrolase family. Homodimer.

It catalyses the reaction (6R)-5,10-methylene-5,6,7,8-tetrahydrofolate + NADP(+) = (6R)-5,10-methenyltetrahydrofolate + NADPH. The enzyme catalyses (6R)-5,10-methenyltetrahydrofolate + H2O = (6R)-10-formyltetrahydrofolate + H(+). It functions in the pathway one-carbon metabolism; tetrahydrofolate interconversion. Catalyzes the oxidation of 5,10-methylenetetrahydrofolate to 5,10-methenyltetrahydrofolate and then the hydrolysis of 5,10-methenyltetrahydrofolate to 10-formyltetrahydrofolate. The chain is Bifunctional protein FolD 1 from Pseudomonas syringae pv. syringae (strain B728a).